We begin with the raw amino-acid sequence, 551 residues long: Adenine deaminase (551 aa).

The protein belongs to the metallo-dependent hydrolases superfamily. Adenine deaminase family. Mn(2+) serves as cofactor.

It catalyses the reaction adenine + H2O + H(+) = hypoxanthine + NH4(+). The protein is Adenine deaminase of Leuconostoc citreum (strain KM20).